Consider the following 22-residue polypeptide: Brevinin-1OKd (22 aa).

At Lys-22 the chain carries Lysine amide.

Expressed by the skin glands.

The protein resides in the secreted. Functionally, antimicrobial peptide. In Nidirana okinavana (Kampira Falls frog), this protein is Brevinin-1OKd.